A 318-amino-acid chain; its full sequence is Gamma-glutamyl hydrolase (318 aa).

The signal sequence occupies residues 1–24; the sequence is MARLGRLLSVLGLVLCGATGLGLS. Residues 25–318 form the Gamma-glutamyl hydrolase domain; that stretch reads APPAPTPKKP…SSFQQSYIFD (294 aa). Asparagine 116 carries N-linked (GlcNAc...) asparagine glycosylation. The Nucleophile role is filled by cysteine 134. Residues asparagine 163 and asparagine 203 are each glycosylated (N-linked (GlcNAc...) asparagine). Histidine 244 (proton donor) is an active-site residue. Asparagine 307 carries an N-linked (GlcNAc...) asparagine glycan.

Belongs to the peptidase C26 family. As to quaternary structure, homodimer.

The protein resides in the secreted. Its subcellular location is the extracellular space. It localises to the lysosome. The protein localises to the melanosome. The enzyme catalyses (6S)-5,6,7,8-tetrahydrofolyl-(gamma-L-Glu)(n) + (n-1) H2O = (6S)-5,6,7,8-tetrahydrofolate + (n-1) L-glutamate. Functionally, hydrolyzes the polyglutamate sidechains of pteroylpolyglutamates. Progressively removes gamma-glutamyl residues from pteroylpoly-gamma-glutamate to yield pteroyl-alpha-glutamate (folic acid) and free glutamate. May play an important role in the bioavailability of dietary pteroylpolyglutamates and in the metabolism of pteroylpolyglutamates and antifolates. Exhibits either endo- or exopeptidase activity depending upon the tissue of origin. When secreted, it acts primarily as an endopeptidase. The sequence is that of Gamma-glutamyl hydrolase (GGH) from Bos taurus (Bovine).